Here is a 314-residue protein sequence, read N- to C-terminus: Homoserine kinase (314 aa).

96–106 (PIGSGLGSSAC) lines the ATP pocket.

It belongs to the GHMP kinase family. Homoserine kinase subfamily.

The protein resides in the cytoplasm. It catalyses the reaction L-homoserine + ATP = O-phospho-L-homoserine + ADP + H(+). Its pathway is amino-acid biosynthesis; L-threonine biosynthesis; L-threonine from L-aspartate: step 4/5. Functionally, catalyzes the ATP-dependent phosphorylation of L-homoserine to L-homoserine phosphate. The chain is Homoserine kinase from Histophilus somni (strain 129Pt) (Haemophilus somnus).